We begin with the raw amino-acid sequence, 415 residues long: Glutamyl-tRNA reductase (415 aa).

Substrate is bound by residues 49 to 52 (TCNR), Ser104, 109 to 111 (EPQ), and Gln115. The active-site Nucleophile is Cys50. An NADP(+)-binding site is contributed by 184–189 (GAGEMI).

The protein belongs to the glutamyl-tRNA reductase family. As to quaternary structure, homodimer.

The enzyme catalyses (S)-4-amino-5-oxopentanoate + tRNA(Glu) + NADP(+) = L-glutamyl-tRNA(Glu) + NADPH + H(+). The protein operates within porphyrin-containing compound metabolism; protoporphyrin-IX biosynthesis; 5-aminolevulinate from L-glutamyl-tRNA(Glu): step 1/2. Its function is as follows. Catalyzes the NADPH-dependent reduction of glutamyl-tRNA(Glu) to glutamate 1-semialdehyde (GSA). In Neisseria meningitidis serogroup C / serotype 2a (strain ATCC 700532 / DSM 15464 / FAM18), this protein is Glutamyl-tRNA reductase.